Consider the following 161-residue polypeptide: Transcriptional repressor NrdR (161 aa).

Over residues 1 to 11 the composition is skewed to polar residues; it reads MRCPSCSSLDT. Residues 1–20 form a disordered region; the sequence is MRCPSCSSLDTQVKDSRPTE. Residues 3-34 fold into a zinc finger; sequence CPSCSSLDTQVKDSRPTEDSAVIRRRRVCMAC. Residues 49–139 enclose the ATP-cone domain; that stretch reads LTVIKRNGRR…VYRNFREAKD (91 aa).

The protein belongs to the NrdR family. Zn(2+) serves as cofactor.

Functionally, negatively regulates transcription of bacterial ribonucleotide reductase nrd genes and operons by binding to NrdR-boxes. The polypeptide is Transcriptional repressor NrdR (Rhodopseudomonas palustris (strain BisB18)).